We begin with the raw amino-acid sequence, 229 residues long: Ribonuclease 3 (229 aa).

An RNase III domain is found at 8–130; that stretch reads LTELEKIVGY…IIGAIYLDSD (123 aa). Glutamate 43 lines the Mg(2+) pocket. The active site involves aspartate 47. Mg(2+) is bound by residues aspartate 116 and glutamate 119. Glutamate 119 is an active-site residue. The DRBM domain maps to 157-227; it reads DPKTRLQELL…ATAALEHLQE (71 aa). A disordered region spans residues 201–229; that stretch reads SPFKGTGTSRRKAEQAAATAALEHLQESA.

This sequence belongs to the ribonuclease III family. As to quaternary structure, homodimer. Requires Mg(2+) as cofactor.

Its subcellular location is the cytoplasm. It carries out the reaction Endonucleolytic cleavage to 5'-phosphomonoester.. Its function is as follows. Digests double-stranded RNA. Involved in the processing of primary rRNA transcript to yield the immediate precursors to the large and small rRNAs (23S and 16S). Processes some mRNAs, and tRNAs when they are encoded in the rRNA operon. Processes pre-crRNA and tracrRNA of type II CRISPR loci if present in the organism. This chain is Ribonuclease 3, found in Idiomarina loihiensis (strain ATCC BAA-735 / DSM 15497 / L2-TR).